We begin with the raw amino-acid sequence, 767 residues long: ATP-dependent rRNA helicase SPB4 (767 aa).

The Q motif signature appears at 28-56 (WTKLTPPLTPWVVSLLSDLGFGQMTPVQA). Residues 59–291 (IPLFVSHKDV…RIGLRNPVRV (233 aa)) enclose the Helicase ATP-binding domain. Residue 72 to 79 (AVTGSGKT) participates in ATP binding. Positions 132–176 (HVQAQQQQDQDEQDEQDEQEAQSDSDTDPDASTALNNKRKSSNHL) are disordered. A compositionally biased stretch (acidic residues) spans 140–160 (DQDEQDEQDEQEAQSDSDTDP). The DEAD box signature appears at 239 to 242 (DEAD). A Helicase C-terminal domain is found at 330-507 (QLARIVLFES…ILEPAEDDAS (178 aa)). A disordered region spans residues 609-767 (KLSGDQAKPP…NADAEPFFVI (159 aa)). 2 stretches are compositionally biased toward basic and acidic residues: residues 636–645 (CDSHDSDDAH) and 659–681 (LEREKGAWSAQKERKQARLANRE). Positions 654 to 746 (KNKRKLEREK…RANSDNDDAM (93 aa)) form a coiled coil. The segment covering 690–700 (LKTQAAESSSN) has biased composition (polar residues). A compositionally biased stretch (basic and acidic residues) spans 701 to 746 (AKHEPPQDDHDEHDWNDDYRKLQKDKRQQRQRNKADRANSDNDDAM). The span at 749-761 (NSDSDAAAANADA) shows a compositional bias: low complexity.

This sequence belongs to the DEAD box helicase family. DDX55/SPB4 subfamily. Component of pre-60S ribosomal complexes.

It is found in the nucleus. The protein localises to the nucleolus. The enzyme catalyses ATP + H2O = ADP + phosphate + H(+). ATP-binding RNA helicase involved in the biogenesis of 60S ribosomal subunits. Binds 90S pre-ribosomal particles and dissociates from pre-60S ribosomal particles after processing of 27SB pre-rRNA. Required for the normal formation of 18S rRNA through the processing of pre-rRNAs at sites A0, A1 and A2, and the normal formation of 25S and 5.8S rRNAs through the processing of pre-rRNAs at sites C1 and C2. The chain is ATP-dependent rRNA helicase SPB4 from Mycosarcoma maydis (Corn smut fungus).